A 361-amino-acid chain; its full sequence is Phospho-N-acetylmuramoyl-pentapeptide-transferase (361 aa).

Helical transmembrane passes span 17-37 (SIYL…LFAG), 66-86 (GTPT…SIFI), 90-110 (TNSL…IGFI), 129-149 (LLFQ…IGLT), 162-182 (ISAY…QIVL), 197-217 (GLAI…AYFT), 232-252 (VGSG…LGFL), 261-281 (IFMG…IAII), 286-306 (LMLP…ILQV), and 340-360 (FWIG…MRGI).

The protein belongs to the glycosyltransferase 4 family. MraY subfamily. Mg(2+) is required as a cofactor.

The protein resides in the cell inner membrane. It carries out the reaction UDP-N-acetyl-alpha-D-muramoyl-L-alanyl-gamma-D-glutamyl-meso-2,6-diaminopimeloyl-D-alanyl-D-alanine + di-trans,octa-cis-undecaprenyl phosphate = di-trans,octa-cis-undecaprenyl diphospho-N-acetyl-alpha-D-muramoyl-L-alanyl-D-glutamyl-meso-2,6-diaminopimeloyl-D-alanyl-D-alanine + UMP. Its pathway is cell wall biogenesis; peptidoglycan biosynthesis. Functionally, catalyzes the initial step of the lipid cycle reactions in the biosynthesis of the cell wall peptidoglycan: transfers peptidoglycan precursor phospho-MurNAc-pentapeptide from UDP-MurNAc-pentapeptide onto the lipid carrier undecaprenyl phosphate, yielding undecaprenyl-pyrophosphoryl-MurNAc-pentapeptide, known as lipid I. The protein is Phospho-N-acetylmuramoyl-pentapeptide-transferase of Fusobacterium nucleatum subsp. nucleatum (strain ATCC 25586 / DSM 15643 / BCRC 10681 / CIP 101130 / JCM 8532 / KCTC 2640 / LMG 13131 / VPI 4355).